Reading from the N-terminus, the 583-residue chain is Aspartate--tRNA ligase (583 aa).

Glutamate 174 contributes to the L-aspartate binding site. Residues 198–201 form an aspartate region; it reads QITK. Arginine 220 contributes to the L-aspartate binding site. ATP contacts are provided by residues 220–222 and glutamine 229; that span reads RDE. Residue histidine 443 participates in L-aspartate binding. An ATP-binding site is contributed by glutamate 477. An L-aspartate-binding site is contributed by arginine 484. ATP is bound at residue 529 to 532; that stretch reads GLDR.

The protein belongs to the class-II aminoacyl-tRNA synthetase family. Type 1 subfamily. Homodimer.

The protein localises to the cytoplasm. It carries out the reaction tRNA(Asp) + L-aspartate + ATP = L-aspartyl-tRNA(Asp) + AMP + diphosphate. In terms of biological role, catalyzes the attachment of L-aspartate to tRNA(Asp) in a two-step reaction: L-aspartate is first activated by ATP to form Asp-AMP and then transferred to the acceptor end of tRNA(Asp). This is Aspartate--tRNA ligase from Streptococcus agalactiae serotype Ia (strain ATCC 27591 / A909 / CDC SS700).